A 191-amino-acid chain; its full sequence is Probable protein adenylyltransferase HI_0977 (191 aa).

Residues 37–162 enclose the Fido domain; it reads GSTKGLQQIH…NDLEIRFLLQ (126 aa). Residues 67–68, 112–114, Arg-118, and Gln-145 contribute to the ATP site; these read KG and GNG.

The protein belongs to the fic family.

The enzyme catalyses L-tyrosyl-[protein] + ATP = O-(5'-adenylyl)-L-tyrosyl-[protein] + diphosphate. It carries out the reaction L-threonyl-[protein] + ATP = 3-O-(5'-adenylyl)-L-threonyl-[protein] + diphosphate. Functionally, probable adenylyltransferase that mediates the addition of adenosine 5'-monophosphate (AMP) to specific residues of target proteins. The polypeptide is Probable protein adenylyltransferase HI_0977 (Haemophilus influenzae (strain ATCC 51907 / DSM 11121 / KW20 / Rd)).